A 182-amino-acid chain; its full sequence is MKPDSIRRYNVIGSRRISNYWWAIIIGSGGLGFLFTGLSSYLQFNLLPIIHAEKIIFFPQGLVMSFYGILGIFFSLYLGLTILFSVGEGFNEFNKELGIIRIFRWGFPGKNRRIDLSYSIDDVKAIRVELKDGINPKRTIYLCIKGQRQIPLTRVGQPLTLEEIEMQAAELAQFLQKDLLLN.

The next 2 membrane-spanning stretches (helical) occupy residues 22–42 (WAII…SSYL) and 66–86 (FYGI…LFSV).

This sequence belongs to the Ycf4 family.

It localises to the plastid. The protein localises to the chloroplast thylakoid membrane. Its function is as follows. Seems to be required for the assembly of the photosystem I complex. The protein is Photosystem I assembly protein Ycf4 of Tupiella akineta (Green alga).